The chain runs to 188 residues: Pyridoxal 5'-phosphate synthase subunit PdxT (188 aa).

47–49 (GES) contacts L-glutamine. Cys-79 (nucleophile) is an active-site residue. L-glutamine contacts are provided by residues Arg-105 and 134 to 135 (IR). Catalysis depends on charge relay system residues His-170 and Glu-172.

Belongs to the glutaminase PdxT/SNO family. As to quaternary structure, in the presence of PdxS, forms a dodecamer of heterodimers. Only shows activity in the heterodimer.

The catalysed reaction is aldehydo-D-ribose 5-phosphate + D-glyceraldehyde 3-phosphate + L-glutamine = pyridoxal 5'-phosphate + L-glutamate + phosphate + 3 H2O + H(+). It catalyses the reaction L-glutamine + H2O = L-glutamate + NH4(+). It functions in the pathway cofactor biosynthesis; pyridoxal 5'-phosphate biosynthesis. Catalyzes the hydrolysis of glutamine to glutamate and ammonia as part of the biosynthesis of pyridoxal 5'-phosphate. The resulting ammonia molecule is channeled to the active site of PdxS. This is Pyridoxal 5'-phosphate synthase subunit PdxT from Listeria monocytogenes serotype 4a (strain HCC23).